A 507-amino-acid chain; its full sequence is Cytochrome P450 7B1 (507 aa).

Transmembrane regions (helical) follow at residues 14 to 34 (PLAL…LFLL), 178 to 198 (IFAF…YGKI), and 287 to 307 (FLWA…YYIL). Residue Cys447 coordinates heme.

Belongs to the cytochrome P450 family. Heme serves as cofactor. In terms of tissue distribution, highly expressed in brain structures including the corpus callosum, the anterior commissure and fornix. The hippocampal expression is particularly prominent in the dentate gyrus. Expressed in liver and kidney. The hepatic expression is sexually dimorphic, predominantly detected in male liver while barely detectable in females. Expressed in lymph nodes and spleens, in both lymphoid and stromal compartments. Higher expression is detected in fibroblastic reticular cells, a type of stromal cells in the lymph nodes. Also expressed at high levels in the outer follicle and at the B cell-T cell boundary of splenic germinal centers. Expressed in dendritic cells (DCs) subpopulations being most abundant in CD8-positive DCs.

The protein localises to the endoplasmic reticulum membrane. It is found in the microsome membrane. The catalysed reaction is 25-hydroxycholesterol + reduced [NADPH--hemoprotein reductase] + O2 = 7alpha,25-dihydroxycholesterol + oxidized [NADPH--hemoprotein reductase] + H2O + H(+). It carries out the reaction (25R)-cholest-5-ene-3beta,26-diol + reduced [NADPH--hemoprotein reductase] + O2 = (25R)-cholest-5-en-3beta,7alpha,26-triol + oxidized [NADPH--hemoprotein reductase] + H2O + H(+). It catalyses the reaction (24S)-hydroxycholesterol + reduced [NADPH--hemoprotein reductase] + O2 = (24S)-7alpha-dihydroxycholesterol + oxidized [NADPH--hemoprotein reductase] + H2O + H(+). The enzyme catalyses (24S)-25-epoxycholesterol + reduced [NADPH--hemoprotein reductase] + O2 = (24S,25)-epoxy-7alpha-hydroxycholesterol + oxidized [NADPH--hemoprotein reductase] + H2O + H(+). The catalysed reaction is (22R)-hydroxycholesterol + reduced [NADPH--hemoprotein reductase] + O2 = (22R,7alpha)-dihydroxycholesterol + oxidized [NADPH--hemoprotein reductase] + H2O + H(+). It carries out the reaction androst-5-en-3beta,17beta-diol + reduced [NADPH--hemoprotein reductase] + O2 = androst-5-en-3beta,7alpha,17beta-triol + oxidized [NADPH--hemoprotein reductase] + H2O + H(+). It catalyses the reaction 5alpha-androstane-3beta,17beta-diol + reduced [NADPH--hemoprotein reductase] + O2 = 5alpha-androstane-3beta,6alpha,17beta-triol + oxidized [NADPH--hemoprotein reductase] + H2O + H(+). The enzyme catalyses 3beta-hydroxyandrost-5-en-17-one + reduced [NADPH--hemoprotein reductase] + O2 = 3beta,7alpha-dihydroxyandrost-5-en-17-one + oxidized [NADPH--hemoprotein reductase] + H2O + H(+). The catalysed reaction is 3beta-hydroxy-5alpha-androstan-17-one + reduced [NADPH--hemoprotein reductase] + O2 = 3beta,7alpha-dihydroxy-5alpha-androstan-17-one + oxidized [NADPH--hemoprotein reductase] + H2O + H(+). It carries out the reaction pregnenolone + reduced [NADPH--hemoprotein reductase] + O2 = 7alpha-hydroxypregnenolone + oxidized [NADPH--hemoprotein reductase] + H2O + H(+). It participates in lipid metabolism; bile acid biosynthesis. It functions in the pathway steroid hormone biosynthesis. With respect to regulation, inhibited by drugs voriconazole and metyrapone. Functionally, a cytochrome P450 monooxygenase involved in the metabolism of endogenous oxysterols and steroid hormones, including neurosteroids. Mechanistically, uses molecular oxygen inserting one oxygen atom into a substrate, and reducing the second into a water molecule, with two electrons provided by NADPH via cytochrome P450 reductase (CPR; NADPH-ferrihemoprotein reductase). Catalyzes the hydroxylation of carbon hydrogen bonds of steroids with a preference for 7-alpha position. Usually metabolizes steroids carrying a hydroxy group at position 3, functioning as a 3-hydroxy steroid 7-alpha hydroxylase. Hydroxylates oxysterols, including 25-hydroxycholesterol and (25R)-cholest-5-ene-3beta,26-diol toward 7-alpha hydroxy derivatives, which may be transported to the liver and converted to bile acids. Via its product 7-alpha,25-dihydroxycholesterol, a ligand for the chemotactic G protein-coupled receptor GPR183/EBI2, regulates B cell migration in germinal centers of lymphoid organs, thus guiding efficient maturation of plasma B cells and overall antigen-specific humoral immune response. 7-alpha hydroxylates neurosteroids, including 3beta-hydroxyandrost-5-en-17-one (dehydroepiandrosterone) and pregnenolone, both involved in hippocampus-associated memory and learning. Metabolizes androstanoids toward 6- or 7-alpha hydroxy derivatives. In Mus musculus (Mouse), this protein is Cytochrome P450 7B1.